We begin with the raw amino-acid sequence, 391 residues long: Leucine aminopeptidase 1 (391 aa).

The N-terminal stretch at 1-19 (MKLSIALALGATASTGVLA) is a signal peptide. A propeptide spanning residues 20–91 (AVVPQQEPLI…YPTLHAGSYV (72 aa)) is cleaved from the precursor. Asn183 is a glycosylation site (N-linked (GlcNAc...) asparagine). The Zn(2+) site is built by His191 and Asp210. Asn235 carries N-linked (GlcNAc...) asparagine glycosylation. Zn(2+)-binding residues include Glu249 and Asp276. Residues Cys325 and Cys329 are joined by a disulfide bond. Zn(2+) is bound at residue His358.

Belongs to the peptidase M28 family. M28E subfamily. Monomer. It depends on Zn(2+) as a cofactor.

The protein resides in the secreted. Extracellular aminopeptidase that allows assimilation of proteinaceous substrates. The protein is Leucine aminopeptidase 1 (lap1) of Aspergillus niger (strain ATCC MYA-4892 / CBS 513.88 / FGSC A1513).